Here is a 206-residue protein sequence, read N- to C-terminus: Small ribosomal subunit protein uS4 (206 aa).

One can recognise an S4 RNA-binding domain in the interval 94–157 (RRLDNVVYRL…RSRTYFKNLV (64 aa)).

The protein belongs to the universal ribosomal protein uS4 family. In terms of assembly, part of the 30S ribosomal subunit. Contacts protein S5. The interaction surface between S4 and S5 is involved in control of translational fidelity.

One of the primary rRNA binding proteins, it binds directly to 16S rRNA where it nucleates assembly of the body of the 30S subunit. Its function is as follows. With S5 and S12 plays an important role in translational accuracy. This chain is Small ribosomal subunit protein uS4, found in Chloroflexus aurantiacus (strain ATCC 29364 / DSM 637 / Y-400-fl).